The primary structure comprises 517 residues: MLHMTQAKKPLMLIILDGWGYREAREGNAILAARTPNLDHLIEEYPWCFLEASGEAVGLPEGQMGNSEVGHLNIGAGRIVYQDLTRINFSIRKGDFFKNPAFLGAISNAKANDSSLHLMGLVSYGGVHSYMAHIHALIKLAQQEGVKKVYIHAFLDGRDVPPKAALKDIEELDAFCKENGNAKIATISGRYYAMDRDKRWDRTKLAYDALTMGVAPYKTPDAETAVSEAYKRGETDEFVKPTVITDSEGKPEAVIKDNDSIIFFNFRPDRARQLTWAFVNKDFENFPREKHPKVYYVCMAQYDETLDLPIAFPPEELENVLGEVLSKQGLAQLRIAETEKYAHVTFFLNGGQEKCYEGEDRCLIPSPKIATYDLKPEMSAYEVTEEVIGRIRSGKYDVIVLNFANMDMVGHTGIFEAAVKAVEAVDSCVGKIATVLKEVGGVAIITADHGNAEQMENPTTEEPHTAHTSNPVKCIYFGNDEVKGLKNGKLCDLAPTLLELLKIRKPEEMTGESLIIK.

The Mn(2+) site is built by Asp-17 and Ser-67. The active-site Phosphoserine intermediate is Ser-67. Substrate-binding positions include His-128, 158-159 (RD), Arg-190, Arg-196, 267-270 (RPDR), and Lys-340. Residues Asp-407, His-411, Asp-448, His-449, and His-467 each contribute to the Mn(2+) site.

It belongs to the BPG-independent phosphoglycerate mutase family. Mn(2+) is required as a cofactor.

It catalyses the reaction (2R)-2-phosphoglycerate = (2R)-3-phosphoglycerate. It participates in carbohydrate degradation; glycolysis; pyruvate from D-glyceraldehyde 3-phosphate: step 3/5. Catalyzes the interconversion of 2-phosphoglycerate and 3-phosphoglycerate. This Methanosarcina barkeri (strain Fusaro / DSM 804) protein is 2,3-bisphosphoglycerate-independent phosphoglycerate mutase 1.